Consider the following 787-residue polypeptide: Protein translocase subunit SecA 2 (787 aa).

ATP-binding positions include Gln86, 104–108 (GEGKT), and Asp493.

It belongs to the SecA family. Monomer and homodimer. Part of the essential Sec protein translocation apparatus which comprises SecA, SecYEG and auxiliary proteins SecDF. Other proteins may also be involved.

It is found in the cell membrane. Its subcellular location is the cytoplasm. The enzyme catalyses ATP + H2O + cellular proteinSide 1 = ADP + phosphate + cellular proteinSide 2.. Functionally, part of the Sec protein translocase complex. Interacts with the SecYEG preprotein conducting channel. Has a central role in coupling the hydrolysis of ATP to the transfer of proteins into and across the cell membrane, serving as an ATP-driven molecular motor driving the stepwise translocation of polypeptide chains across the membrane. The polypeptide is Protein translocase subunit SecA 2 (Bacillus thuringiensis subsp. konkukian (strain 97-27)).